We begin with the raw amino-acid sequence, 363 residues long: Aminomethyltransferase (363 aa).

The protein belongs to the GcvT family. As to quaternary structure, the glycine cleavage system is composed of four proteins: P, T, L and H.

The enzyme catalyses N(6)-[(R)-S(8)-aminomethyldihydrolipoyl]-L-lysyl-[protein] + (6S)-5,6,7,8-tetrahydrofolate = N(6)-[(R)-dihydrolipoyl]-L-lysyl-[protein] + (6R)-5,10-methylene-5,6,7,8-tetrahydrofolate + NH4(+). In terms of biological role, the glycine cleavage system catalyzes the degradation of glycine. This chain is Aminomethyltransferase, found in Prosthecochloris aestuarii (strain DSM 271 / SK 413).